The sequence spans 164 residues: Phosphopantetheine adenylyltransferase (164 aa).

S9 is a binding site for substrate. ATP-binding positions include 9–10 (SF) and H17. Substrate contacts are provided by K41, L73, and K87. ATP is bound by residues 88–90 (GLR), E98, and 123–129 (HSFLSSS).

It belongs to the bacterial CoaD family. As to quaternary structure, homohexamer. It depends on Mg(2+) as a cofactor.

The protein resides in the cytoplasm. It carries out the reaction (R)-4'-phosphopantetheine + ATP + H(+) = 3'-dephospho-CoA + diphosphate. It functions in the pathway cofactor biosynthesis; coenzyme A biosynthesis; CoA from (R)-pantothenate: step 4/5. Reversibly transfers an adenylyl group from ATP to 4'-phosphopantetheine, yielding dephospho-CoA (dPCoA) and pyrophosphate. This is Phosphopantetheine adenylyltransferase from Rubrobacter xylanophilus (strain DSM 9941 / JCM 11954 / NBRC 16129 / PRD-1).